A 480-amino-acid chain; its full sequence is MKVLSVSSEVFPLIKTGGLADVSGALPIALKAFGVETKTLLPGYPAVMKVIRDAVIRLEFPDLLGERATVLEVQHEGLDLLILDAPAYYDRPGGPYLDPLGKDYPDNWRRFAALSLAASEIAAGLMPGWRPDLVHTHDWQAALTSVYMRYYPTPELPSVLTIHNIAFQGQFGSEIFAGLRLPAHAFTTESIEYYGTVGFLKGGLKTAHAITTVSPTYADEILTSEFGMGLEGVIASRVDDLHGIVNGIDTDIWNPATDPVVHTHYGQTTLKNREENRRSIAEFFGLDNDDAPIFCVISRLTWQKGMDIVANVADEIVAMGGKLVVLGSGEAALEGALLASASRHPGRVGVSIGYNEPMSHLMQAGCDAIIIPSRFEPCGLTQLYGLRYGCVPIVARTGGLNDTVIDANHAALAAKVATGIQFAPVTETGMLQAIRRAMHFYQDRKLWTQLQKQGMKSDVSWEKSAERYAALYSSLVSKGM.

K15 is an ADP-alpha-D-glucose binding site.

Belongs to the glycosyltransferase 1 family. Bacterial/plant glycogen synthase subfamily.

The catalysed reaction is [(1-&gt;4)-alpha-D-glucosyl](n) + ADP-alpha-D-glucose = [(1-&gt;4)-alpha-D-glucosyl](n+1) + ADP + H(+). It functions in the pathway glycan biosynthesis; glycogen biosynthesis. Its function is as follows. Synthesizes alpha-1,4-glucan chains using ADP-glucose. The protein is Glycogen synthase of Rhizobium johnstonii (strain DSM 114642 / LMG 32736 / 3841) (Rhizobium leguminosarum bv. viciae).